Reading from the N-terminus, the 223-residue chain is Deoxyribose-phosphate aldolase (223 aa).

Asp92 functions as the Proton donor/acceptor in the catalytic mechanism. Catalysis depends on Lys158, which acts as the Schiff-base intermediate with acetaldehyde. The active-site Proton donor/acceptor is Lys188.

It belongs to the DeoC/FbaB aldolase family. DeoC type 1 subfamily.

It is found in the cytoplasm. The enzyme catalyses 2-deoxy-D-ribose 5-phosphate = D-glyceraldehyde 3-phosphate + acetaldehyde. It participates in carbohydrate degradation; 2-deoxy-D-ribose 1-phosphate degradation; D-glyceraldehyde 3-phosphate and acetaldehyde from 2-deoxy-alpha-D-ribose 1-phosphate: step 2/2. In terms of biological role, catalyzes a reversible aldol reaction between acetaldehyde and D-glyceraldehyde 3-phosphate to generate 2-deoxy-D-ribose 5-phosphate. The polypeptide is Deoxyribose-phosphate aldolase (Mycobacterium avium (strain 104)).